The primary structure comprises 105 residues: uncharacterized protein (105 aa).

This is an uncharacterized protein from Saccharolobus islandicus (Sulfolobus islandicus).